We begin with the raw amino-acid sequence, 110 residues long: ATP synthase epsilon chain (110 aa).

This sequence belongs to the ATPase epsilon chain family. In terms of assembly, F-type ATPases have 2 components, CF(1) - the catalytic core - and CF(0) - the membrane proton channel. CF(1) has five subunits: alpha(3), beta(3), gamma(1), delta(1), epsilon(1). CF(0) has three main subunits: a, b and c.

It is found in the cell inner membrane. Functionally, produces ATP from ADP in the presence of a proton gradient across the membrane. This chain is ATP synthase epsilon chain, found in Rickettsia typhi (strain ATCC VR-144 / Wilmington).